The following is a 282-amino-acid chain: 4-hydroxy-3-methylbut-2-enyl diphosphate reductase (282 aa).

Cys-12 lines the [4Fe-4S] cluster pocket. His-40 and His-72 together coordinate (2E)-4-hydroxy-3-methylbut-2-enyl diphosphate. Residues His-40 and His-72 each coordinate dimethylallyl diphosphate. Residues His-40 and His-72 each coordinate isopentenyl diphosphate. [4Fe-4S] cluster is bound at residue Cys-94. His-122 is a binding site for (2E)-4-hydroxy-3-methylbut-2-enyl diphosphate. Position 122 (His-122) interacts with dimethylallyl diphosphate. An isopentenyl diphosphate-binding site is contributed by His-122. The Proton donor role is filled by Glu-124. Position 160 (Thr-160) interacts with (2E)-4-hydroxy-3-methylbut-2-enyl diphosphate. A [4Fe-4S] cluster-binding site is contributed by Cys-188. Positions 216, 218, and 260 each coordinate (2E)-4-hydroxy-3-methylbut-2-enyl diphosphate. Positions 216, 218, and 260 each coordinate dimethylallyl diphosphate. Isopentenyl diphosphate-binding residues include Ser-216, Asn-218, and Ser-260.

Belongs to the IspH family. Requires [4Fe-4S] cluster as cofactor.

The catalysed reaction is isopentenyl diphosphate + 2 oxidized [2Fe-2S]-[ferredoxin] + H2O = (2E)-4-hydroxy-3-methylbut-2-enyl diphosphate + 2 reduced [2Fe-2S]-[ferredoxin] + 2 H(+). It catalyses the reaction dimethylallyl diphosphate + 2 oxidized [2Fe-2S]-[ferredoxin] + H2O = (2E)-4-hydroxy-3-methylbut-2-enyl diphosphate + 2 reduced [2Fe-2S]-[ferredoxin] + 2 H(+). The protein operates within isoprenoid biosynthesis; dimethylallyl diphosphate biosynthesis; dimethylallyl diphosphate from (2E)-4-hydroxy-3-methylbutenyl diphosphate: step 1/1. It functions in the pathway isoprenoid biosynthesis; isopentenyl diphosphate biosynthesis via DXP pathway; isopentenyl diphosphate from 1-deoxy-D-xylulose 5-phosphate: step 6/6. Functionally, catalyzes the conversion of 1-hydroxy-2-methyl-2-(E)-butenyl 4-diphosphate (HMBPP) into a mixture of isopentenyl diphosphate (IPP) and dimethylallyl diphosphate (DMAPP). Acts in the terminal step of the DOXP/MEP pathway for isoprenoid precursor biosynthesis. The polypeptide is 4-hydroxy-3-methylbut-2-enyl diphosphate reductase (Geobacter metallireducens (strain ATCC 53774 / DSM 7210 / GS-15)).